The following is a 211-amino-acid chain: Fucoxanthin-chlorophyll a-c binding protein F, chloroplastic (211 aa).

Residues A1 to M33 constitute a chloroplast transit peptide. A run of 3 helical transmembrane segments spans residues I75 to L95, I116 to M136, and G177 to P197.

This sequence belongs to the fucoxanthin chlorophyll protein family. As to quaternary structure, the LHC complex of chromophytic algae is composed of fucoxanthin, chlorophyll A and C bound non-covalently by fucoxanthin chlorophyll proteins (FCPs). The ratio of pigments in this LHC is; fucoxanthin: chlorophyll C: chlorophyll A; (0.6-1): (0.1-0.3): (1).

Its subcellular location is the plastid. The protein resides in the chloroplast thylakoid membrane. The light-harvesting complex (LHC) functions as a light receptor, it captures and delivers excitation energy to photosystems with which it is closely associated. Energy is transferred from the carotenoid and chlorophyll C (or B) to chlorophyll A and the photosynthetic reaction centers where it is used to synthesize ATP and reducing power. The chain is Fucoxanthin-chlorophyll a-c binding protein F, chloroplastic (FCPF) from Macrocystis pyrifera (Giant kelp).